A 170-amino-acid polypeptide reads, in one-letter code: Adenine phosphoribosyltransferase (170 aa).

The protein belongs to the purine/pyrimidine phosphoribosyltransferase family. In terms of assembly, homodimer.

It localises to the cytoplasm. The enzyme catalyses AMP + diphosphate = 5-phospho-alpha-D-ribose 1-diphosphate + adenine. The protein operates within purine metabolism; AMP biosynthesis via salvage pathway; AMP from adenine: step 1/1. Its function is as follows. Catalyzes a salvage reaction resulting in the formation of AMP, that is energically less costly than de novo synthesis. The protein is Adenine phosphoribosyltransferase of Brachyspira hyodysenteriae (strain ATCC 49526 / WA1).